The following is an 898-amino-acid chain: Chloride channel protein 2 (898 aa).

The Cytoplasmic segment spans residues 1–90; the sequence is MAAPAAAAVE…RCHKFLVSRV (90 aa). Residues 19-37 are essential for channel gating by both voltage and cell volume; it reads QYEQTLMYGRYTQDLGAFA. Thr-23 carries the post-translational modification Phosphothreonine. The modulates channel gating by both voltage and cell volume stretch occupies residues 39–52; that stretch reads EEAARIRLGGPEPW. 2 consecutive transmembrane segments (helical) span residues 91–124 and 133–158; these read GEDW…AQQW and LLLQ…TQIL. The Selectivity filter part_1 motif lies at 164–168; sequence GSGIP. The segment at residues 167 to 174 is an intramembrane region (helical); that stretch reads IPEMKTIL. Helical transmembrane passes span 183–201 and 208–226; these read LTLK…ALGS and EGPF…SKFL. The Selectivity filter part_2 motif lies at 206 to 210; sequence GKEGP. Intramembrane regions (helical) lie at residues 242–254 and 258–266; these read MLAA…VGCC and PIGGVLFSI. The next 5 membrane-spanning stretches (helical) occupy residues 278–298, 324–352, 361–380, 432–452, and 460–483; these read YWRG…LAVW, LPAF…VQVM, FLMR…ISTL, ANVF…SALA, and GAFM…MAAW. The Selectivity filter part_3 motif lies at 460–464; sequence GAFMP. An intramembrane region (helical) is located at residues 500–514; that stretch reads GGYAVVGAAALAGAV. The segment at residues 515-516 is an intramembrane region (note=Loop between two helices); that stretch reads TH. Residues 517–528 constitute an intramembrane region (helical); it reads TVSTAVIVFELT. The note=Loop between two helices intramembrane region spans 529 to 533; that stretch reads GQIAH. A helical transmembrane segment spans residues 534-551; the sequence is ILPVMIAVILANAVAQSL. At 552 to 898 the chain is on the cytoplasmic side; that stretch reads QPSLYDSIIR…SPSDSDDKCQ (347 aa). One can recognise a CBS 1 domain in the interval 587–645; the sequence is MVRDVPHVALSCTFRDLRLALHRTKGRTLALVESPESMILLGSIERTQVVALLAAQLSP. The segment covering 647–658 has biased composition (basic residues); it reads RRRQSKQKRRVA. Residues 647–675 are disordered; it reads RRRQSKQKRRVAHTSPPSCQESPPSPETS. Ser-710 carries the post-translational modification Phosphoserine. Positions 726–766 are disordered; it reads FCGSPPPEAASESEKSESSEKRKSKRVRISLASDSDLEGEM. A compositionally biased stretch (basic and acidic residues) spans 737–746; sequence ESEKSESSEK. Ser-758 carries the post-translational modification Phosphoserine. Positions 790-850 constitute a CBS 2 domain; that stretch reads IDPAPFQLVE…GSVTAQGVKV (61 aa). The Basolateral membrane sorting signature appears at 812–813; sequence LL. A disordered region spans residues 856-898; sequence SFRDSATSSSDTETTEVHALWGPRSRHGLPREGSPSDSDDKCQ.

This sequence belongs to the chloride channel (TC 2.A.49) family. ClC-2/CLCN2 subfamily. Homodimer. Interacts with auxiliary subunit HEPACAM. Phosphorylated. Activated by dephosphorylation. Ubiquitously expressed.

It is found in the cell membrane. Its subcellular location is the basolateral cell membrane. The protein localises to the cell projection. It localises to the dendritic spine membrane. The protein resides in the axon. The enzyme catalyses chloride(in) = chloride(out). The catalysed reaction is thiocyanate(in) = thiocyanate(out). It catalyses the reaction bromide(in) = bromide(out). It carries out the reaction nitrate(in) = nitrate(out). The enzyme catalyses iodide(out) = iodide(in). With respect to regulation, common gate kinetics are down-regulated by intracellular ATP. Inhibited by AK-42, a derivative of meclofenamate. Inhibited by Cd(2+). Inhibited by Zn(2+) and PKC activation. Inhibited at acidic pH. CCLN2:HEPACAM channel conductance is up-regulated upon hypo-osmolarity. Its function is as follows. Voltage-gated and osmosensitive chloride channel. Forms a homodimeric channel where each subunit has its own ion conduction pathway. Conducts double-barreled currents controlled by two types of gates, two fast glutamate gates that control each subunit independently and a slow common gate that opens and shuts off both subunits simultaneously. Displays inward rectification currents activated upon membrane hyperpolarization and extracellular hypotonicity. Contributes to chloride conductance involved in neuron excitability. In hippocampal neurons, generates a significant part of resting membrane conductance and provides an additional chloride efflux pathway to prevent chloride accumulation in dendrites upon GABA receptor activation. In glia, associates with the auxiliary subunit HEPACAM/GlialCAM at astrocytic processes and myelinated fiber tracts where it may regulate transcellular chloride flux buffering extracellular chloride and potassium concentrations. Regulates aldosterone production in adrenal glands. The opening of CLCN2 channels at hyperpolarized membrane potentials in the glomerulosa causes cell membrane depolarization, activation of voltage-gated calcium channels and increased expression of aldosterone synthase, the rate-limiting enzyme for aldosterone biosynthesis. Contributes to chloride conductance in retinal pigment epithelium involved in phagocytosis of shed photoreceptor outer segments and photoreceptor renewal. Conducts chloride currents at the basolateral membrane of epithelial cells with a role in chloride reabsorption rather than secretion. Permeable to small monovalent anions with chloride &gt; thiocyanate &gt; bromide &gt; nitrate &gt; iodide ion selectivity. This Oryctolagus cuniculus (Rabbit) protein is Chloride channel protein 2 (CLCN2).